Consider the following 448-residue polypeptide: Leukocyte immunoglobulin-like receptor subfamily B member 4 (448 aa).

The signal sequence occupies residues 1–21 (MIPTFTALLCLGLSLGPRTHM). Over 22 to 259 (QAGPLPKPTL…PHSGLRRHWE (238 aa)) the chain is Extracellular. 2 Ig-like C2-type domains span residues 27–118 (PKPT…LVMT) and 124–218 (PTLS…LIVS). 2 cysteine pairs are disulfide-bonded: C49–C98 and C144–C195. The segment at 217 to 248 (VSGSLEDPRPSPTRSVSTAAGPEDQPLMPTGS) is disordered. A helical transmembrane segment spans residues 260 to 280 (VLIGVLVVSILLLSLLLFLLL). The Cytoplasmic portion of the chain corresponds to 281 to 448 (QHWRQGKHRT…PSVYATLAIH (168 aa)). The tract at residues 297-448 (DFQRPPGAAE…PSVYATLAIH (152 aa)) is disordered. S319 is modified (phosphoserine). Positions 344 to 354 (MDTRQSPHDED) are enriched in basic and acidic residues. The ITIM motif 1 signature appears at 358 to 363 (VTYAKV). Over residues 384-398 (LDTKDRQAEEDRQMD) the composition is skewed to basic and acidic residues. Short sequence motifs (ITIM motif) lie at residues 410-415 (VTYAQL) and 440-445 (SVYATL).

As to quaternary structure, interacts with PTPN6. As to expression, detected on monocytes, macrophages, dendritic cells, natural killer cells and B-cells (at protein level). Expressed in the lung.

The protein resides in the cell membrane. In terms of biological role, inhibitory receptor involved in the down-regulation of the immune response and the development of immune tolerance. Receptor for FN1. Receptor for apolipoprotein APOE. Receptor for ALCAM/CD166. Inhibits receptor-mediated phosphorylation of cellular proteins and mobilization of intracellular calcium ions. Inhibits FCGR1A/CD64-mediated monocyte activation by inducing phosphatase-mediated down-regulation of the phosphorylation of multiple proteins including LCK, SYK, LAT and ERK, leading to a reduction in TNF production. This inhibition of monocyte activation occurs at least in part via binding to FN1. Inhibits T cell proliferation, inducing anergy, suppressing the differentiation of IFNG-producing CD8+ cytotoxic T cells and enhancing the generation of CD8+ T suppressor cells. Induces up-regulation of CD86 on dendritic cells. Interferes with TNFRSF5-signaling and NF-kappa-B up-regulation. The chain is Leukocyte immunoglobulin-like receptor subfamily B member 4 (LILRB4) from Homo sapiens (Human).